We begin with the raw amino-acid sequence, 176 residues long: MGANGTLVECKRGESDAVVFRFLIFDAPSPSSVTAYVKLMQKYNVRHIVRACGQTYSAEAFEKQGMVVHGWSFDDGAPPTQTVIDNWLNLLEQEKNKSPPETIAVHCVAGLGRAPILVALALVEYGGMPPLDAVGYVRGRRKGAINQVQLNWLMRYKPRHQEGNEGSLSCAGCAVM.

A Tyrosine-protein phosphatase domain is found at 13–165; the sequence is GESDAVVFRF…YKPRHQEGNE (153 aa). C52 and C107 are oxidised to a cystine. Catalysis depends on D75, which acts as the Proton donor. Catalysis depends on C107, which acts as the Phosphocysteine intermediate. 109-113 provides a ligand contact to substrate; sequence AGLGR. C173 is subject to Cysteine methyl ester. Residue C173 is the site of S-farnesyl cysteine attachment. A propeptide spans 174-176 (removed in mature form); the sequence is AVM.

The protein belongs to the protein-tyrosine phosphatase family.

The protein resides in the flagellar pocket. The enzyme catalyses O-phospho-L-tyrosyl-[protein] + H2O = L-tyrosyl-[protein] + phosphate. Its activity is regulated as follows. Activated in a reduced environment which promotes the reduction of the disulfide bond between the regulatory Cys-52 and the catalytic Cys-107 residues. Inhibited by sodium orthovanadate. In terms of biological role, has protein tyrosine phosphatase activity. The sequence is that of Protein tyrosine phosphatase PRL-1 from Trypanosoma cruzi (strain CL Brener).